The chain runs to 547 residues: Intercellular adhesion molecule 3 (547 aa).

The first 29 residues, methionine 1–glycine 29, serve as a signal peptide directing secretion. The Extracellular segment spans residues glutamine 30–histidine 485. One can recognise an Ig-like C2-type 1 domain in the interval glycine 46–serine 103. Asparagine 52, asparagine 84, asparagine 87, asparagine 101, asparagine 110, and asparagine 134 each carry an N-linked (GlcNAc...) asparagine glycan. Intrachain disulfides connect cysteine 53-cysteine 96 and cysteine 57-cysteine 100. One can recognise an Ig-like C2-type 2 domain in the interval glycine 132–glutamine 197. Cysteine 139 and cysteine 190 form a disulfide bridge. Asparagine 206, asparagine 264, asparagine 295, asparagine 308, asparagine 320, asparagine 363, asparagine 389, asparagine 453, and asparagine 457 each carry an N-linked (GlcNAc...) asparagine glycan. Residues glutamate 234–glutamate 301 enclose the Ig-like C2-type 3 domain. Residues cysteine 241 and cysteine 294 are joined by a disulfide bond. An Ig-like C2-type 4 domain is found at glycine 329–aspartate 382. Cysteine 336 and cysteine 375 are disulfide-bonded. Residues lysine 416–glycine 469 form the Ig-like C2-type 5 domain. Cysteine 423 and cysteine 462 are joined by a disulfide. Residues phenylalanine 486–phenylalanine 510 form a helical membrane-spanning segment. Topologically, residues arginine 511–glutamate 547 are cytoplasmic.

It belongs to the immunoglobulin superfamily. ICAM family. Interacts with moesin/MSN. In terms of processing, upon stimulation by a physiologic stimuli becomes rapidly and transiently phosphorylated on serine residues. As to expression, leukocytes.

The protein resides in the membrane. ICAM proteins are ligands for the leukocyte adhesion protein LFA-1 (integrin alpha-L/beta-2). ICAM3 is also a ligand for integrin alpha-D/beta-2. In association with integrin alpha-L/beta-2, contributes to apoptotic neutrophil phagocytosis by macrophages. The sequence is that of Intercellular adhesion molecule 3 (ICAM3) from Pan troglodytes (Chimpanzee).